Reading from the N-terminus, the 171-residue chain is Protein-export protein SecB (171 aa).

It belongs to the SecB family. Homotetramer, a dimer of dimers. One homotetramer interacts with 1 SecA dimer.

The protein resides in the cytoplasm. Its function is as follows. One of the proteins required for the normal export of preproteins out of the cell cytoplasm. It is a molecular chaperone that binds to a subset of precursor proteins, maintaining them in a translocation-competent state. It also specifically binds to its receptor SecA. In Gluconacetobacter diazotrophicus (strain ATCC 49037 / DSM 5601 / CCUG 37298 / CIP 103539 / LMG 7603 / PAl5), this protein is Protein-export protein SecB.